We begin with the raw amino-acid sequence, 302 residues long: tRNA-cytidine(32) 2-sulfurtransferase (302 aa).

A PP-loop motif motif is present at residues 44–49 (SGGKDS). [4Fe-4S] cluster-binding residues include cysteine 119, cysteine 122, and cysteine 210.

It belongs to the TtcA family. Homodimer. Mg(2+) is required as a cofactor. [4Fe-4S] cluster serves as cofactor.

It localises to the cytoplasm. The catalysed reaction is cytidine(32) in tRNA + S-sulfanyl-L-cysteinyl-[cysteine desulfurase] + AH2 + ATP = 2-thiocytidine(32) in tRNA + L-cysteinyl-[cysteine desulfurase] + A + AMP + diphosphate + H(+). The protein operates within tRNA modification. Functionally, catalyzes the ATP-dependent 2-thiolation of cytidine in position 32 of tRNA, to form 2-thiocytidine (s(2)C32). The sulfur atoms are provided by the cysteine/cysteine desulfurase (IscS) system. In Tolumonas auensis (strain DSM 9187 / NBRC 110442 / TA 4), this protein is tRNA-cytidine(32) 2-sulfurtransferase.